Reading from the N-terminus, the 231-residue chain is Ion-translocating oxidoreductase complex subunit E (231 aa).

6 helical membrane-spanning segments follow: residues 18–38 (ALVQ…ATNA), 39–59 (LGLG…ISTL), 63–83 (TPSE…VSAV), 86–106 (LINA…PLIV), 125–145 (ALSA…MFVL), and 182–202 (PFLL…MLAG).

This sequence belongs to the NqrDE/RnfAE family. In terms of assembly, the complex is composed of six subunits: RsxA, RsxB, RsxC, RsxD, RsxE and RsxG.

The protein resides in the cell inner membrane. Functionally, part of a membrane-bound complex that couples electron transfer with translocation of ions across the membrane. Required to maintain the reduced state of SoxR. The chain is Ion-translocating oxidoreductase complex subunit E from Escherichia coli O6:K15:H31 (strain 536 / UPEC).